The sequence spans 599 residues: MSDLSHIRNFSIIAHIDHGKSTLADRFIQMCGGLAAREMEAQVLDSMDLERERGITIKAHSVTLHYKAKDGKTYQLNFIDTPGHVDFTYEVSRSLAACEGALLVVDAGQGVEAQSVANCYTAIEQGLEVMPVLNKMDLPQADPDRVKDEIEKIIGIDATDAVACSAKSGMGVDEVLERLVQTIPAPTGDIEAPLQALIIDSWFDNYLGVVSLVRVRQGRVKKGDKILVKSTGKVHLVDSVGVFTPKHTATADLKAGEVGFIIASIKDIHGAPVGDTLTLSSTPEVEVLPGFKKIQPQVYAGLFPVSSDDFEDFRDALQKLTLNDSSLQYMPESSDALGFGFRCGFLGMLHMEIIQERLEREYDLDLITTAPSVIYELELKTGETITVDNPSKLPDVSSVADFREPIVTATILVPQEHLGNVITLCIEKRGVQRDMQFLGSQVQVRYDLPMNEVVLDFFDRLKSTSRGYASLDYHFDRYQSANLVKLDVLINGDKVDALALIVHRDNAAYKGRALTEKMKELIPRQMFDVAIQAAIGGQIIARTTVKALRKNVLAKCYGGDVSRKKKLLEKQKAGKKRMKQVGNVEIPQEAFLAVLRLDS.

The region spanning 5–187 (SHIRNFSIIA…RLVQTIPAPT (183 aa)) is the tr-type G domain. GTP is bound by residues 17–22 (DHGKST) and 134–137 (NKMD).

Belongs to the TRAFAC class translation factor GTPase superfamily. Classic translation factor GTPase family. LepA subfamily.

Its subcellular location is the cell inner membrane. It carries out the reaction GTP + H2O = GDP + phosphate + H(+). Required for accurate and efficient protein synthesis under certain stress conditions. May act as a fidelity factor of the translation reaction, by catalyzing a one-codon backward translocation of tRNAs on improperly translocated ribosomes. Back-translocation proceeds from a post-translocation (POST) complex to a pre-translocation (PRE) complex, thus giving elongation factor G a second chance to translocate the tRNAs correctly. Binds to ribosomes in a GTP-dependent manner. The chain is Elongation factor 4 from Ectopseudomonas mendocina (strain ymp) (Pseudomonas mendocina).